Reading from the N-terminus, the 229-residue chain is uncharacterized protein (229 aa).

Helical transmembrane passes span 1-21 (MFGT…GGIF), 32-52 (ILMQ…ITQH), 58-78 (YPIL…IINL), 100-120 (TAVL…EAAL), 139-159 (IVLA…LFSW), 178-198 (LINE…LSIL), and 206-226 (LNLL…HAFG).

The protein resides in the cell membrane. This is an uncharacterized protein from Bacillus subtilis (strain 168).